Consider the following 72-residue polypeptide: Translation initiation factor IF-1 (72 aa).

Residues 1-72 form the S1-like domain; the sequence is MSKEDSFEME…SKGRITYRAR (72 aa).

This sequence belongs to the IF-1 family. As to quaternary structure, component of the 30S ribosomal translation pre-initiation complex which assembles on the 30S ribosome in the order IF-2 and IF-3, IF-1 and N-formylmethionyl-tRNA(fMet); mRNA recruitment can occur at any time during PIC assembly.

The protein localises to the cytoplasm. Functionally, one of the essential components for the initiation of protein synthesis. Stabilizes the binding of IF-2 and IF-3 on the 30S subunit to which N-formylmethionyl-tRNA(fMet) subsequently binds. Helps modulate mRNA selection, yielding the 30S pre-initiation complex (PIC). Upon addition of the 50S ribosomal subunit IF-1, IF-2 and IF-3 are released leaving the mature 70S translation initiation complex. This chain is Translation initiation factor IF-1, found in Pseudomonas savastanoi pv. phaseolicola (strain 1448A / Race 6) (Pseudomonas syringae pv. phaseolicola (strain 1448A / Race 6)).